Reading from the N-terminus, the 1437-residue chain is Envelopment polyprotein (1437 aa).

Positions 1-21 (MAISTSLLIVALLIKLCLVNT) are cleaved as a signal peptide. Residues 22 to 207 (APPISKCFQD…GYMASSICQN (186 aa)) are Lumenal-facing. Asparagine 65 and asparagine 88 each carry an N-linked (GlcNAc...) asparagine; by host glycan. A helical transmembrane segment spans residues 208-228 (IELIIIIILTLAIFIFMCIIT). Topologically, residues 229–312 (RTYICYLMLP…RVARSLCKSK (84 aa)) are cytoplasmic. The chain crosses the membrane as a helical span at residues 313-333 (GSSLVISILTAMLILSFITPL). The Lumenal portion of the chain corresponds to 334–373 (EAMTTNYPDDKKFTLKEVNDIVLGRDMEQELKSSILILMS). The helical transmembrane segment at 374 to 394 (ICGIGIILIFFGLTVLLEIVL) threads the bilayer. The Cytoplasmic segment spans residues 395–460 (ELIAKRSTIF…TYYIKIRNLK (66 aa)). The chain crosses the membrane as a helical span at residues 461-481 (LIMLIFSIVILMQNATMLVVA). The Lumenal segment spans residues 482-1391 (GENCWTNTEI…EPLNNFFGNY (910 aa)). N-linked (GlcNAc...) asparagine; by host glycans are attached at residues asparagine 627 and asparagine 1173. Residues 1392-1412 (LNMFLYILGGIILLFLALYIL) form a helical membrane-spanning segment. The Cytoplasmic segment spans residues 1413–1437 (MPMCARLRDELKRNERLHQMEMKKR).

This sequence belongs to the orthobunyavirus envelope glycoprotein family. As to quaternary structure, glycoprotein C and Glycoprotein N interact with each other. In terms of processing, specific enzymatic cleavages in vivo yield mature proteins including nonstructural protein NSm, Glycoprotein C, and Glycoprotein N.

Its subcellular location is the virion membrane. It is found in the host Golgi apparatus membrane. The protein localises to the host endoplasmic reticulum membrane. In terms of biological role, glycoprotein C and Glycoprotein N interact with each other and are present at the surface of the virion. They are able to attach the virion to a cell receptor and to promote fusion of membranes after endocytosis of the virion. The polypeptide is Envelopment polyprotein (GP) (Culex).